Here is a 67-residue protein sequence, read N- to C-terminus: DNA-directed RNA polymerase subunit omega (67 aa).

Belongs to the RNA polymerase subunit omega family. As to quaternary structure, the RNAP catalytic core consists of 2 alpha, 1 beta, 1 beta' and 1 omega subunit. When a sigma factor is associated with the core the holoenzyme is formed, which can initiate transcription.

The catalysed reaction is RNA(n) + a ribonucleoside 5'-triphosphate = RNA(n+1) + diphosphate. Promotes RNA polymerase assembly. Latches the N- and C-terminal regions of the beta' subunit thereby facilitating its interaction with the beta and alpha subunits. The protein is DNA-directed RNA polymerase subunit omega of Bordetella avium (strain 197N).